Reading from the N-terminus, the 452-residue chain is Pup--protein ligase (452 aa).

Residue glutamate 9 participates in Mg(2+) binding. ATP is bound at residue arginine 53. Tyrosine 55 contacts Mg(2+). Catalysis depends on aspartate 57, which acts as the Proton acceptor. Glutamate 63 is a Mg(2+) binding site. 2 residues coordinate ATP: threonine 66 and tryptophan 419.

This sequence belongs to the Pup ligase/Pup deamidase family. Pup-conjugating enzyme subfamily.

It carries out the reaction ATP + [prokaryotic ubiquitin-like protein]-L-glutamate + [protein]-L-lysine = ADP + phosphate + N(6)-([prokaryotic ubiquitin-like protein]-gamma-L-glutamyl)-[protein]-L-lysine.. The protein operates within protein degradation; proteasomal Pup-dependent pathway. It participates in protein modification; protein pupylation. Functionally, catalyzes the covalent attachment of the prokaryotic ubiquitin-like protein modifier Pup to the proteasomal substrate proteins, thereby targeting them for proteasomal degradation. This tagging system is termed pupylation. The ligation reaction involves the side-chain carboxylate of the C-terminal glutamate of Pup and the side-chain amino group of a substrate lysine. In Acidothermus cellulolyticus (strain ATCC 43068 / DSM 8971 / 11B), this protein is Pup--protein ligase.